A 295-amino-acid chain; its full sequence is Glutamyl-Q tRNA(Asp) synthetase (295 aa).

L-glutamate is bound by residues Arg5–Ser9 and Glu41. Residues Pro8 to Ser18 carry the 'HIGH' region motif. Zn(2+) contacts are provided by Cys97, Cys99, Tyr117, and Cys121. Residues Tyr178 and Arg196 each contribute to the L-glutamate site. The short motif at Lys234–Gln238 is the 'KMSKS' region element. Residue Lys237 participates in ATP binding.

The protein belongs to the class-I aminoacyl-tRNA synthetase family. GluQ subfamily. Zn(2+) is required as a cofactor.

In terms of biological role, catalyzes the tRNA-independent activation of glutamate in presence of ATP and the subsequent transfer of glutamate onto a tRNA(Asp). Glutamate is transferred on the 2-amino-5-(4,5-dihydroxy-2-cyclopenten-1-yl) moiety of the queuosine in the wobble position of the QUC anticodon. In Neisseria meningitidis serogroup C (strain 053442), this protein is Glutamyl-Q tRNA(Asp) synthetase.